A 556-amino-acid polypeptide reads, in one-letter code: MSSTTAGLIFLAVLVAALVAVHVPLGDYMFRVYTTDRDLATERTIYRLIGVDARSEQTWGAYARGVLAFSSVSIIFLFVLQLVQGKLPLHLHDPATKMTPSLAWNTAVSFVTNTNWQAYSGETTQGHLVQMAGLAVQNFVSAAVGMAVAVALVRGFARRRTGELGNFWVDLVRGTLRILLPISIVGAVLLVAGGAIQNFHLHDQVVTTLGGTAQTIPGGPVASQEVIKELATNGGGFYNANSAHPFENPTAWTNWLEVFLILVIGFSLPRTFGRMVGNPKQGYAIASVMASLYLLSTGFMLWFQLQHHGTVPSAVGAAMEGVEQRFGVPDSGVFAAATTLTSTGAVDSAHDSLTSLGGMITMFNMQLGEVAPGGTGSGLYGMLVLAVITVFVAGLMVGRTPEYLGKKINPREIKLAASYFLVTPLIVLTGTAIAMALPGERAGMANSGPHGLSEVLYAFTSAANNNGSAFAGLSANTEWYNTALGLAMAFGRFLPIVLVLALAGSLARQGSTPDSAGTLPTHRPQFVGMVAGVTLIVVALTFLPMLALGPLAEGIH.

Helical transmembrane passes span 6–26, 65–85, 133–153, 176–196, 249–269, 283–303, 378–398, 419–439, 483–503, and 526–546; these read AGLIFLAVLVAALVAVHVPLG, GVLAFSSVSIIFLFVLQLVQG, GLAVQNFVSAAVGMAVAVALV, LRILLPISIVGAVLLVAGGAI, PTAWTNWLEVFLILVIGFSLP, YAIASVMASLYLLSTGFMLWF, GLYGMLVLAVITVFVAGLMVG, YFLVTPLIVLTGTAIAMALPG, ALGLAMAFGRFLPIVLVLALA, and FVGMVAGVTLIVVALTFLPML.

Belongs to the KdpA family. The system is composed of three essential subunits: KdpA, KdpB and KdpC.

The protein localises to the cell membrane. Part of the high-affinity ATP-driven potassium transport (or Kdp) system, which catalyzes the hydrolysis of ATP coupled with the electrogenic transport of potassium into the cytoplasm. This subunit binds the extracellular potassium ions and delivers the ions to the membrane domain of KdpB through an intramembrane tunnel. In Mycolicibacterium paratuberculosis (strain ATCC BAA-968 / K-10) (Mycobacterium paratuberculosis), this protein is Potassium-transporting ATPase potassium-binding subunit.